Here is a 395-residue protein sequence, read N- to C-terminus: Chorismate synthase (395 aa).

2 residues coordinate NADP(+): R40 and R46. FMN is bound by residues 134 to 136 (RAS), 256 to 257 (QA), G301, 316 to 320 (KPIST), and R342.

Belongs to the chorismate synthase family. In terms of assembly, homotetramer. Requires FMNH2 as cofactor.

The catalysed reaction is 5-O-(1-carboxyvinyl)-3-phosphoshikimate = chorismate + phosphate. It functions in the pathway metabolic intermediate biosynthesis; chorismate biosynthesis; chorismate from D-erythrose 4-phosphate and phosphoenolpyruvate: step 7/7. Its function is as follows. Catalyzes the anti-1,4-elimination of the C-3 phosphate and the C-6 proR hydrogen from 5-enolpyruvylshikimate-3-phosphate (EPSP) to yield chorismate, which is the branch point compound that serves as the starting substrate for the three terminal pathways of aromatic amino acid biosynthesis. This reaction introduces a second double bond into the aromatic ring system. This is Chorismate synthase from Beutenbergia cavernae (strain ATCC BAA-8 / DSM 12333 / CCUG 43141 / JCM 11478 / NBRC 16432 / NCIMB 13614 / HKI 0122).